We begin with the raw amino-acid sequence, 501 residues long: Alpha-internexin (501 aa).

Positions 1-87 (MSFGSEHYLC…SQAAARTNEY (87 aa)) are head. Serine 72 carries the phosphoserine modification. The interval 88–129 (KIIRTNEKEQLQGLNDRFAVFIEKVHQLETQNRALEAELAAL) is coil 1A. In terms of domain architecture, IF rod spans 94–407 (EKEQLQGLND…KLLEGEETRF (314 aa)). The segment at 130 to 142 (RQRHAEPSRVGEL) is linker 1. Residues 143-238 (FQRELRELRA…QVHDEEVAEL (96 aa)) form a coil 1B region. Serine 219 carries the post-translational modification Phosphoserine. Positions 239 to 262 (LATLQASSQAAAEVDVAVAKPDLT) are linker 2. Residues 263 to 408 (SALREIRAQY…LLEGEETRFS (146 aa)) form a coil 2 region. Lysine 290 is subject to N6-acetyllysine. Residues serine 335 and serine 498 each carry the phosphoserine modification. A tail region spans residues 409-501 (TGGLSISGLN…EESTSSSQKM (93 aa)). The interval 441 to 501 (SAGLSLKKEE…EESTSSSQKM (61 aa)) is disordered. Positions 488–501 (KSATEESTSSSQKM) are enriched in polar residues.

Belongs to the intermediate filament family. Forms homodimers (in vitro). Forms heterodimers with NEFL, NEFM or NEFH (in vitro). O-glycosylated.

Its function is as follows. Class-IV neuronal intermediate filament that is able to self-assemble. It is involved in the morphogenesis of neurons. It may form an independent structural network without the involvement of other neurofilaments or it may cooperate with NEFL to form the filamentous backbone to which NEFM and NEFH attach to form the cross-bridges. May also cooperate with the neuronal intermediate filament protein PRPH to form filamentous networks. This is Alpha-internexin (Ina) from Mus musculus (Mouse).